We begin with the raw amino-acid sequence, 1982 residues long: MAADDDNGDGTSLFDVFSASPLKNNDEGSLDIYAGLDSAVSDSASKSCVPSRNCLDLYEEILTEEGTAKEATYNDLQVEYGKCQLQMKELMKKFKEIQTQNFSLINENQSLKKNISALIKTARVEINRKDEEISNLHQRLSEFPHFRNNHKTARTFDTVKTKDLKSRSPHLDDCSKTDHRAKSDVSKDVHHSTSLPNLEKEGKPHSDKRSTSHLPTSVEKHCTNGVWSRSHYQVGEGSSNEDSRRGRKDIRHSQFNRGTERVRKDLSTGCGDGEPRILEASQRLQGHPEKYGKGEPKTESKSSKFKSNSDSDYKGERINSSWEKETPGERSHSRVDSQSDKKLERQSERSQNINRKEVKSQDKEERKVDQKPKSVVKDQDHWRRSERASLPHSKNEITFSHNSSKYHLEERRGWEDCKRDKSVNSHSFQDGRCPSSLSNSRTHKNIDSKEVDAMHQWENTPLKAERHRTEDKRKREQESKEENRHIRNEKRVPTEHLQKTNKETKKTTTDLKKQNEPKTDKGEVLDNGVSEGADNKELAMKAESGPNETKNKDLKLSFMKKLNLTLSPAKKQPVSQDNQHKITDIPKSSGVCDSESSMQVKTVAYVPSISEHILGEAAVSEHTMGETKSTLLEPKVALLAVTEPRIGISETNKEDENSLLVRSVDNTMHCEEPICGTETSFPSPMEIQQTESLFPSTGMKQTINNGRAAAPVVMDVLQTDVSQNFGLELDTKRNDNSDYCGISEGMEMKVALSTTVSETTESILQPSIEEADILPIMLSEDNNPKFEPSVIVTPLVESKSCHLEPCLPKETLDSSLQQTELMDHRMATGETNSVYHDDDNSVLSIDLNHLRPIPEAISPLNSPVRPVAKVLRNESPPQVPVYNNSHKDVFLPNSAHSTSKSQSDLNKENQKPIYKSDKCTEADTCKNSPLDELEEGEIRSDSETSKPQESFEKNSKRRVSADVRKSKTIPRRGKSTVCLDKDSRKTHVRIHQTNNKWNKRPDKSSRSSKTEKKDKVMSTSSLEKIVPIIAVPSSEQEIMHMLRMIRKHVRKNYMKFKAKFSLIQFHRIIESAILSFTSLIKHLNLHKISKSVTTLQKNLCDIIESKLKQVKKNGIVDRLFEQQLPDMKKKLWKFVDDQLDYLFAKLKKILVCDSKSFGRDSDEGKLEKTSKQNAQYSNSQKRSVDNSNRELLKEKLSKSEDPVHYKSLVGCKKSEENYQDQNNSSINTVKHDIKKNFNICFDNIKNSQSEERSLEVHCPSTPKSEKNEGSSIEDAQTSQHATLKPERSFEILTEQQASSLTFNLVSDAQMGEIFKSLLQGSDLLDSSVNCTEKSEWELKTPEKQLLETLKCESIPACTTEELVSGVASPCPKMISDDNWSLLSSEKGPSLSSGLSLPVHPDVLDESCMFEVSTNLPLSKDNVCSVEKSKPCVSSILLEDLAVSLTVPSPLKSDGHLSFLKPDMSSSSTPEEVISAHFSEDALLEEEDASEQDIHLALESDNSSSKSSCSSSWTSRSVAPGFQYHPNLPMHAVIMEKSNDHFIVKIRRATPSTSSGLKQSMMPDELLTSLPRHGKEADEGPEKEYISCQNTVFKSVEELENSNKNVDGSKSTHEEQSSMIQTQVPDIYEFLKDASDKMGHSDEVADECFKLHQVWETKVPESIEELPSMEEISHSVGEHLPNTYVDLTKDPVTETKNLGEFIEVTVLHIDQLGCSGGNLNQSAQILDNSLQADTVGAFIDLTQDASSEAKSEGNHPALAVEDLGCGVIQVDEDNCKEEKAQVANRPLKCIVEETYIDLTTESPSSCEVKKDELKSEPGSNCDNSELPGTLHNSHKKRRNISDLNHPHKKQRKETDLTNKEKTKKPTQDSCENTEAHQKKASKKKAPPVTKDPSSLKATPGIKDSSAALATSTSLSAKNVIKKKGEIIILWTRNDDREILLECQKRGPSFKTFAYLAAKLDKNPNQVSERFQQLMKLFEKSKCR.

Alanine 2 carries the N-acetylalanine modification. Residue serine 20 is modified to Phosphoserine. Basic and acidic residues predominate over residues 159–191; that stretch reads VKTKDLKSRSPHLDDCSKTDHRAKSDVSKDVHH. The interval 159-552 is disordered; the sequence is VKTKDLKSRS…ESGPNETKNK (394 aa). Residue serine 194 is modified to Phosphoserine. Residues 198–210 are compositionally biased toward basic and acidic residues; that stretch reads LEKEGKPHSDKRS. Positions 225–240 are enriched in polar residues; sequence GVWSRSHYQVGEGSSN. A compositionally biased stretch (basic and acidic residues) spans 286–395; that stretch reads GHPEKYGKGE…ERASLPHSKN (110 aa). The segment covering 396–405 has biased composition (polar residues); that stretch reads EITFSHNSSK. Composition is skewed to basic and acidic residues over residues 406–423, 444–455, and 463–524; these read YHLE…DKSV, KNIDSKEVDAMH, and KAER…KGEV. Phosphoserine is present on serine 567. The interval 569 to 593 is disordered; the sequence is AKKQPVSQDNQHKITDIPKSSGVCD. A phosphoserine mark is found at serine 658, serine 815, and serine 875. Disordered regions lie at residues 875–1017, 1157–1188, and 1251–1283; these read SPPQ…DKVM, FGRD…DNSN, and ERSL…HATL. Positions 894 to 904 are enriched in polar residues; it reads SAHSTSKSQSD. 4 stretches are compositionally biased toward basic and acidic residues: residues 905–924, 936–965, 999–1016, and 1157–1170; these read LNKE…EADT, GEIR…DVRK, KRPD…KDKV, and FGRD…EKTS. Serine 940 carries the post-translational modification Phosphoserine. At serine 1161 the chain carries Phosphoserine. Composition is skewed to polar residues over residues 1171–1181 and 1269–1281; these read KQNAQYSNSQK and GSSI…SQHA. Lysine 1343 carries the post-translational modification N6-acetyllysine. The SUMO interaction motif 1 (SIM); mediates the binding to polysumoylated substrates motif lies at 1683-1687; that stretch reads YVDLT. Residues 1709 to 1982 are NCOA2-binding; that stretch reads DQLGCSGGNL…MKLFEKSKCR (274 aa). The SUMO interaction motif 2 (SIM); mediates the binding to polysumoylated substrates signature appears at 1737–1741; that stretch reads FIDLT. The SUMO interaction motif 3 (SIM); mediates the binding to polysumoylated substrates motif lies at 1794–1798; that stretch reads YIDLT. Residues 1803–1909 are disordered; the sequence is SSCEVKKDEL…IKDSSAALAT (107 aa). The segment covering 1851-1865 has biased composition (basic and acidic residues); that stretch reads KETDLTNKEKTKKPT.

In terms of assembly, self-associates. Component of the death-inducing signaling complex (DISC) with CASP8, FADD and FAS. Interacts with NCOA2 and NCOA3. Interacts with SRRT. Interacts with TRAF2. Interacts with NPAT. Interacts (via SIM domains) with SUMO1 and SUMO2. Interacts with SP100; may negatively regulate CASP8AP2 export from the nucleus to the cytoplasm.

The protein localises to the cytoplasm. It localises to the nucleus. The protein resides in the PML body. It is found in the mitochondrion. In terms of biological role, participates in TNF-alpha-induced blockade of glucocorticoid receptor (GR) transactivation at the nuclear receptor coactivator level, upstream and independently of NF-kappa-B. Suppresses both NCOA2- and NCOA3-induced enhancement of GR transactivation. Involved in TNF-alpha-induced activation of NF-kappa-B via a TRAF2-dependent pathway. Acts as a downstream mediator for CASP8-induced activation of NF-kappa-B. Required for the activation of CASP8 in FAS-mediated apoptosis. Required for histone gene transcription and progression through S phase. The protein is CASP8-associated protein 2 of Homo sapiens (Human).